A 363-amino-acid chain; its full sequence is Histidinol-phosphate aminotransferase (363 aa).

The residue at position 220 (lysine 220) is an N6-(pyridoxal phosphate)lysine.

The protein belongs to the class-II pyridoxal-phosphate-dependent aminotransferase family. Histidinol-phosphate aminotransferase subfamily. Homodimer. Requires pyridoxal 5'-phosphate as cofactor.

The catalysed reaction is L-histidinol phosphate + 2-oxoglutarate = 3-(imidazol-4-yl)-2-oxopropyl phosphate + L-glutamate. The protein operates within amino-acid biosynthesis; L-histidine biosynthesis; L-histidine from 5-phospho-alpha-D-ribose 1-diphosphate: step 7/9. The chain is Histidinol-phosphate aminotransferase from Paramagnetospirillum magneticum (strain ATCC 700264 / AMB-1) (Magnetospirillum magneticum).